The chain runs to 398 residues: Glia-derived nexin (398 aa).

The signal sequence occupies residues 1 to 19 (MNWHLPLFLLASVTLPSIC). Residues N118 and N159 are each glycosylated (N-linked (GlcNAc...) asparagine).

Belongs to the serpin family.

It localises to the secreted. It is found in the extracellular space. In terms of biological role, serine protease inhibitor with activity toward thrombin, trypsin, and urokinase. Promotes neurite extension by inhibiting thrombin. Binds heparin. The polypeptide is Glia-derived nexin (SERPINE2) (Homo sapiens (Human)).